A 65-amino-acid polypeptide reads, in one-letter code: Small ribosomal subunit protein bS21 (65 aa).

Residues 46–57 (RLKRSRSKRRAQ) are compositionally biased toward basic residues. The segment at 46–65 (RLKRSRSKRRAQRANEERNS) is disordered.

The protein belongs to the bacterial ribosomal protein bS21 family.

The protein is Small ribosomal subunit protein bS21 of Chlorobaculum tepidum (strain ATCC 49652 / DSM 12025 / NBRC 103806 / TLS) (Chlorobium tepidum).